The primary structure comprises 315 residues: uncharacterized protein (315 aa).

It belongs to the asfivirus C315R family.

This is an uncharacterized protein from Ornithodoros (relapsing fever ticks).